The sequence spans 734 residues: Photosystem I P700 chlorophyll a apoprotein A2 (734 aa).

The next 8 membrane-spanning stretches (helical) occupy residues 46 to 69, 135 to 158, 175 to 199, 273 to 291, 330 to 353, 369 to 395, 417 to 439, and 517 to 535; these read IFAS…FHVA, LYTG…LHLQ, LNHH…HVAI, IAHH…GHMY, LHFQ…QHMY, AALY…IFFV, AIIS…LYVH, and FLVH…LILV. Cys559 and Cys568 together coordinate [4Fe-4S] cluster. The next 2 membrane-spanning stretches (helical) occupy residues 575–596 and 643–665; these read AFYL…YWHW and LSVW…MFLI. Residues His654, Met662, and Tyr670 each coordinate chlorophyll a. Phylloquinone is bound at residue Trp671. The chain crosses the membrane as a helical span at residues 707 to 727; the sequence is LVGLAHFSVGYVLTYAAFLIA.

This sequence belongs to the PsaA/PsaB family. In terms of assembly, the PsaA/B heterodimer binds the P700 chlorophyll special pair and subsequent electron acceptors. PSI consists of a core antenna complex that captures photons, and an electron transfer chain that converts photonic excitation into a charge separation. The eukaryotic PSI reaction center is composed of at least 11 subunits. P700 is a chlorophyll a/chlorophyll a' dimer, A0 is one or more chlorophyll a, A1 is one or both phylloquinones and FX is a shared 4Fe-4S iron-sulfur center. serves as cofactor.

Its subcellular location is the plastid. The protein localises to the chloroplast thylakoid membrane. The catalysed reaction is reduced [plastocyanin] + hnu + oxidized [2Fe-2S]-[ferredoxin] = oxidized [plastocyanin] + reduced [2Fe-2S]-[ferredoxin]. Functionally, psaA and PsaB bind P700, the primary electron donor of photosystem I (PSI), as well as the electron acceptors A0, A1 and FX. PSI is a plastocyanin-ferredoxin oxidoreductase, converting photonic excitation into a charge separation, which transfers an electron from the donor P700 chlorophyll pair to the spectroscopically characterized acceptors A0, A1, FX, FA and FB in turn. Oxidized P700 is reduced on the lumenal side of the thylakoid membrane by plastocyanin. The chain is Photosystem I P700 chlorophyll a apoprotein A2 from Chlorokybus atmophyticus (Soil alga).